The sequence spans 437 residues: tRNA-queuosine alpha-mannosyltransferase (437 aa).

The protein belongs to the glycosyltransferase group 1 family. Glycosyltransferase 4 subfamily.

It is found in the cytoplasm. The protein resides in the nucleus. The catalysed reaction is queuosine(34) in tRNA(Asp) + GDP-alpha-D-mannose = O-4''-alpha-D-mannosylqueuosine(34) in tRNA(Asp) + GDP + H(+). Functionally, glycosyltransferase that specifically catalyzes mannosylation of cytoplasmic tRNA(Asp) modified with queuosine at position 34 (queuosine(34)). Mannosylates the cyclopentene moiety of queuosine(34) in tRNA(Asp) to form mannosyl-queuosine(34). Mannosylation of queuosine(34) in tRNA(Asp) is required to slow-down elongation at cognate codons, GAC and GAU, thereby regulating protein translation. This Xenopus tropicalis (Western clawed frog) protein is tRNA-queuosine alpha-mannosyltransferase (gtdc1).